Here is a 4963-residue protein sequence, read N- to C-terminus: MPFKQPLGERDAANRVAPTFIRPLADKRAVVGETIILECQLEGHPDPAIKWLKDGHNVSMCPDYRIEEDGLKHRLVIPQVQAADSGRFTAQASNSAGTKQSTCILICAPAPTPVPGAKSAVASPAPPQTPVGPSAPIFLKELRHQPLKPGAGVTFEGRVIAVPPPNIEWMKNGKPLQNYRAKIEHDQKTGIISLIIPQMFNDDAGEYTIKATNVHGEAISGAQLLPREQYDRWFSNEQTRLTKDRKQGLLSQTLRPSSVAQKQMQKQGYDTDQGSVDMHWTISESETEPELSALDARGVGTKPIIRTPLRGLRLTEGTDAILQANIVGNPKPRIQWLFNGRPLQVSGPRMQMTYKGSMAVLKISMVTTEEAGDYTVASENRFGKVESSARIEVYPLSVPDERRKENQLREQQERDRQQQQQALVEASLARERQRDAENRRIREEQDRLRVLFEREKAERERLEEERRQLEHEKRLRQQQQQQLFEREKSEKEERARLEEERRRLEHEKHLRQQQQTQPYNLHYQQHHQPHQAWQDLDLVRRPQYASDEYQEPHYAQIRPHQQQQQHYQQQQQSPRQEVTHQNLYEQHRRQQQLIREQQLYQHQHQQHQQQQQQPQEQQQQRFHHFNQYQQHIREQHQNTMPVFRQQQPTQVTNGGIKAANGSAKTANGSANGSANGSAVHAANGGPSSQQARGHEHGAALVNARPPQFLVHPQSVAAKAFETVTFSAKVVGTPTPSLTWQKSDGTVIQSGGKYKIENGPDGSGRLIIEKVDAHDADMYMLVARNDGGSFQSRFSLNVLQAKSPEAPEFTGKFQSTTLYDGDSVKLYCKAAGEGVSFKWFKDNEPISSGGSYAVDNKGNETTLHINNATMKEGGWYRCDATNKHGTTTLKGRVVVNSRQKFNGPAHREMITLRKVDKVERSRTPVNQLQDVSASKSSPKFEGSLQSQQLVEGQSARLEIKYTPVEDPNLRIAWLLNGKGILASSRIVTFTDFGIAALEINPVNVFDQGEYTVVAVNPLGEARVSANIAVIGHGSFIQQQQSGSQFGGTAYQSKGAQAPAGTHLDLPNFHSDLRSQEVFEGQQIHLETKLTPINDPDLRVVWLLDGNELPSNDKYRQTLSHGFASLDIPQTSSNDSGLYSCRAFNKLGESENQATIIIVPKSDLQQFEQHRQLDVEDVREIQFAHSSQDLTPKFLSQIQPFHCEQELGRSFFEARIQPINDPTLRVSWLKDGQPLPNANRIQIFQNFGVVSLSLHPTYPEDAGVYTCVLFNSHGQAQSSAELTTVWIDTLQLDSKHADSLPIIGYLDSHQIHIGPQSVERPEEFNSLEAPKFARELAGKIEVMENERVHFEARILPANDVKMTVEWYHNGNPLPAAHRFHPMFDFGYVALDLLYAYPQDSGTYTLVARNELGEARSNVELVVGTEKVLYLEPHHPEGLERIKELEQDRRQGIAEVEDRTCDAAPKFLNDLPDIQLNEHENIHVDLRATPVNDPTMVIEWFVNGRPLLTGSRVKTLNEFGFIALDIKGAIAEDSGTYSVRASNLLGEAIRQCVITVTPAGQILSDTQHQESLGKINYLENLNKYGRVEIEDKGPQEPPTFVVPLQADLGDVEEGEPIHLECQVNPINDNSLKIIWLRDGQSLPHGHRFRTFYDFGFVSLDILGFYAQDAGTYTCRAENSLGQAETVATIRCAPKDAILGAVQHPRSYARIQEIEAPKPAPQEVPDLPHQPPAFVKQLGPAIQCMEGDNVYLEAQVTPTDDNSLTYEWLVNGQPLMKAHRFVLSQDFGYIALNILYCYPEDNGTYTLVVRNRAGEAQSTVDINCGHTGGNFTDSFHPNSLHRIAELETPIQRAEPLPDKEKEVPTIAKPLPATIDSVHESQTLHLEAQVTPIDDNTLRYEWLFNGNPLKASSRYRVLNDFGFVSLDIDYIIAEDSGKYTLVVYNSAGRAETSCEFQVDRLKSILSDTAHPESLRRIREMEQLQPAKPSDDDAAAQPPVFTQQLTGPTEPLKEGQSVHMDCVVQPINDPSLRIEWFHDGRPLMFGSRIRTIHDFGYVGLEFLHIHPEDTGTYTCKATNLIGEATTDIFLECKPRRNIYLDTHHESSWQKIQEIENRVDEREPTPELTFQPPTFTENLADKEDAQEGQSIRLECRLIPVNDPTMRVTWTRNGQPLPEASRFMPARNFDYVNLDILALYGEDSGVYTCKAVSAFGEAATSCTVKCAAGKSLLLDTMHDASWKRVQEIENREKLEAVDAEPEKTAPKFVTQLNSSLGELQEGVPIHLEAQVEPTNDNQLTVQWFHNGQPLANGHRFRTRHDFGYVALDILYAFAQDTGEWACVARNSLGEAQTIANFTVLPRGTIYTDSQHPESWQKIQVLEAPRAAAPEKPDAEHDAPQFIEPLDSIDRMEFQSAHFQTKVTPQTDPNLRIQWFKDGQPLMNSNRFKLTTDFGYISLDIAHTVPEDSGVYSVKASNAKGDAEVQAQLTVTGNAVILGDTQHEQSWQKIQLIEAPRAPGEEEPDVKHGPPKFVTQLHSLDGVVEGQPSHFEAQFIPFSDPKTSVQWYLNGNPLSASSRRILRNDFGLVSLDLQYTLGEDAGEYSVVVKNSEGEDRTSGQLSCTTRAAILGDTQHEQSWQRIQEIEAPRAPGAEPEGPVYEKPSFVQPLQSVGDLPEGSVALLEARLVPVNDPNLRVQWFYNDQPLMESNWISTSNDFGCVSLRIAPVYARHTGVYSCKAWNDSGNAVTSANVGVQGSEGLLLDTSHPASLQKIQELEAIDKYARLDAPEREYEKPQWVQGFENYENVGEGQTVTLHGLVEPSGDPHLRLEWLLNGTPLRNANRFRQEYEFGNAILTIVHVLPHDSGVYTCRAWNTQGEASTSATVTTAGYEKILYDSQHPVSWERIQELEAPKIVEEIEEIVQKEKPNFLTQLESAENVPEGVPLHLESTFQPARDPELKVVWQKNGQPLGASQLVQTKHELGWATLDISSANEDHNGVYTLTITNSEGEAVSTASIRVAGTGPILGNTRHEESWKRIQILEAPKEAEPEAPAPVYDHPAITTQIDDKECNEGDHVHFEALITPVNDPRLQVQWIRNGVPLAHGSKYAIQQDFGICTLDVAYTYPEDEGVYQLRIWNPEGEAVSSATLKCHGKDAILGDVQHQESWKRIQEIEAPKQKLEEADPEPKGPPRFIQQLTSPGSLVENQPAHFEATVEPVDDPTLTINWFLNGEPMSASSRVKMINDFGWVIMDIAQTEPRDSGEWKCVAKNAAGEAVSTATIEVQGKEVILQDSLQPQSLDRIRQIEAGKPAPEERPDQQFEAPAIVNALQVQGALEEGGSAHLQTQFTPVADPSIKVEWLKDGQPIFHSNRYKMVHDFGFAVLDILHLLKHDAGEYTFRVSNNSGEASTSTSFEVSESSGLILQPQNEQKAKAVEILEDNLRRRPEEIEQELKEATPVFIEPLSAPVETEEGGRAHFTARYEPVNDNQLQVQWYHDGRPLKNGSRIKTINSFGYVVLEISPTYPEDNGEYICRAVNRVGEAVTSTKLTCTPKEGIISATQLPERMANAGRRIAEIEAPRPAREDAPDADHGPPKFTSALAGPPELQEGQQAHLECQVTPVADPRLVIEWFHNGQPVNHTNRMKAIHDFGFVVLQLTPAEPQDSGTWTCRATNQHGSDEVSTELKVVGGGGVSYEWQSTAERKERITELEDWIHRPKEDLNLPAVDYPAPSFSQGLTDLGQLNEADATAFVCVLEPIGDPTLRVQWEHNGHPIPYSNRISCTNEFGVATLLIKHLIAADAGEYKCVATNVKGSATSVGKIAVESSTQIDAPQVVQQLVDSVENILEGDSIHLECRVTPINDPRLHVEWLRNGAPLPEASRFKPTFEFGFVSLDILYAYPEDNGDYELVVRNDKGEARSKTKITVLPRPSLDYTSQTHGNQQDSLESHFKQHSQAKLQLTANDIYNESDKRAPEFRTQLQNIGVLEGEFCRFETQVAPINDPYLKVEWFKDKKPVLLGHRFRSTLDFGFACLDLLYALPDDTGEYHCVATNRHGQTMISAKLACQGASHVITDSQMPQGLRVSNVKKDNKNIYWSEQGGAVQPKQKQAPQFTIPLRNLQVTENQPARFECAVTGYPRPKVTWFINGNQCLHGHRFKLNFDGLHYLTVSKSRISDAGEVVAIARNTEGETISTATLDIFQNDDFRQTKLRPANFKTSDELRERELQWQRDTLGSLGPAFEAAPKPDAQKLMHVERAQSPIEPMESQELIQKFTRPRDDNFYNKLSYVELQKPQFKGMELEEVNLKAGKVEKYQPPVEEMERVNLKAIPEKDQQEVGWERPDWAGQDGTSKLPGADEGRFKKLPTPAPELDVPARDQVKLKTAKPTRGKDLEAGEKVKLKTEKAKIKEIQQKPEQPKEEPIVHKDAVQLKTQQLPKTGIKGDHFTVDREKDLKETPAVVKPVIEETRISNKSISNVVHESSEYTSSYASNQSRLTYQAYREHKESTSSDVYLSVETADSFSQVQRLEYSPRSPRRERIIGFHMIRPQPTKIGQSKQAPPTISQQLKPLQGELGKAAKFVIEFAGAAPVKVTWLKDGKEIKSTFRTLITTTPTNSSLHIGRLENSHAGEYTVRLENAAGTVESLANLTVAPPTTQGKAPDFSARLNDLRIQQNGPAEFSCQIGGEPKPTIQWFKDGQPLPNDDRFQVVEEGGAYKLKFSNIISTDAGIYEIVAKNGVGEARCKARLNVNLQKTGKGAEEGPRYEAPRFTSQIQPIVVDEGKGAQFSAQFSGFPDPTIRWYRNNEPVKHADGYEISQSKGEAILRISAARNEDVAEYKVEASNPAGKASSVANLVLTPRSGRIAKSTISRGGSASYQSSDKAAADSPHFIAKLSDISARQGHTVKFSAEVDGNPEPTVQWQFKGKPISASNNVKISRDGKRAILELARVTPDSAGEYQIVIRNDKGAATSQAKLTLSR.

3 Ig-like domains span residues 18-105, 133-220, and 303-392; these read PTFI…TCIL, PSAP…EAIS, and PIIR…ARIE. Disordered regions lie at residues 396-420, 466-501, 557-578, 598-622, and 652-696; these read LSVP…QQQQ, RRQL…EEER, IRPH…RQEV, QLYQ…QQRF, and TNGG…GHEH. Composition is skewed to basic and acidic residues over residues 399-417, 466-475, and 484-501; these read PDER…RDRQ, RRQLEHEKRL, and FERE…EEER. Residues 401–517 adopt a coiled-coil conformation; that stretch reads ERRKENQLRE…KHLRQQQQTQ (117 aa). A compositionally biased stretch (low complexity) spans 557–576; it reads IRPHQQQQQHYQQQQQSPRQ. Residues 658 to 685 are compositionally biased toward low complexity; sequence AANGSAKTANGSANGSANGSAVHAANGG. 20 consecutive Ig-like domains span residues 706 to 796, 806 to 893, 937 to 1027, 1065 to 1155, 1199 to 1281, 1462 to 1554, 1594 to 1687, 1728 to 1819, 1992 to 2085, 2126 to 2217, 2258 to 2350, 2391 to 2481, 2522 to 2613, 2654 to 2745, 2787 to 2878, 2919 to 3010, 3051 to 3141, 3182 to 3273, 3314 to 3407, and 3448 to 3539; these read PQFL…FSLN, PEFT…GRVV, PKFE…ANIA, PNFH…ATII, FHCE…AELT, PKFL…ITVT, PPTF…ATIR, PAFV…VDIN, PPVF…IFLE, PTFT…CTVK, PKFV…ANFT, PQFI…AQLT, PKFV…GQLS, PSFV…ANVG, PQWV…ATVT, PNFL…ASIR, PAIT…ATLK, PRFI…ATIE, PAIV…FEVS, and PVFI…TKLT. Cys-827 and Cys-877 are oxidised to a cystine. An intrachain disulfide couples Cys-1201 to Cys-1265. Cys-1618 and Cys-1671 are joined by a disulfide. 2 disulfides stabilise this stretch: Cys-2016/Cys-2069 and Cys-2148/Cys-2201. The span at 3567 to 3583 shows a compositional bias: basic and acidic residues; sequence EAPRPAREDAPDADHGP. The interval 3567 to 3590 is disordered; that stretch reads EAPRPAREDAPDADHGPPKFTSAL. Ig-like domains are found at residues 3584–3677, 3720–3811, 3821–3913, 3962–4052, and 4098–4185; these read PKFT…LKVV, PSFS…GKIA, PQVV…TKIT, PEFR…AKLA, and PQFT…ATLD. 2 disulfides stabilise this stretch: Cys-3606-Cys-3659 and Cys-3742-Cys-3795. The interval 4193 to 4963 is required for F-actin binding; it reads RQTKLRPANF…TSQAKLTLSR (771 aa). Residues 4319-4329 are compositionally biased toward basic and acidic residues; that stretch reads DQQEVGWERPD. The segment at 4319–4357 is disordered; that stretch reads DQQEVGWERPDWAGQDGTSKLPGADEGRFKKLPTPAPEL. 4 consecutive Ig-like domains span residues 4546 to 4634, 4645 to 4733, 4752 to 4842, and 4872 to 4960; these read PTIS…ANLT, PDFS…ARLN, PRFT…LVLT, and PHFI…AKLT.

In terms of assembly, interacts (via Ig-like domains) with F-actin. Expressed in the pharyngeal, body wall, and anal depressor muscles. Expression in these muscles is higher in hermaphrodites than in males. Expressed in the vulva and the myoepithelial sheath of the proximal ovary. Expressed in the proximal gonad of males. Not expressed in the dense bodies of the obliquely striated body wall muscle.

It is found in the cytoplasm. The protein resides in the myofibril. The protein localises to the sarcomere. Its subcellular location is the cytoskeleton. Its function is as follows. Positively regulates actin filament organization and provides mechanical stability to the myofibrils during body wall muscle contraction. Required for the organization of sarcomeric actin filaments and myosin protein myo-3 in striated body wall muscle cells. Not required for assembly of dense bodies, which are a type of integrin-based adhesion structure that link the plasma membrane to thin filaments of myofibrils, in body wall muscle. Not required for the atn-1 protein to localize to the dense bodies. This Caenorhabditis elegans protein is Kettin homolog.